The primary structure comprises 63 residues: Large ribosomal subunit protein uL30 (63 aa).

Belongs to the universal ribosomal protein uL30 family. In terms of assembly, part of the 50S ribosomal subunit.

This is Large ribosomal subunit protein uL30 from Rickettsia felis (strain ATCC VR-1525 / URRWXCal2) (Rickettsia azadi).